The sequence spans 175 residues: Large ribosomal subunit protein uL10 (175 aa).

It belongs to the universal ribosomal protein uL10 family. In terms of assembly, part of the ribosomal stalk of the 50S ribosomal subunit. The N-terminus interacts with L11 and the large rRNA to form the base of the stalk. The C-terminus forms an elongated spine to which L12 dimers bind in a sequential fashion forming a multimeric L10(L12)X complex.

Forms part of the ribosomal stalk, playing a central role in the interaction of the ribosome with GTP-bound translation factors. This Prochlorococcus marinus (strain SARG / CCMP1375 / SS120) protein is Large ribosomal subunit protein uL10.